The following is a 395-amino-acid chain: S-adenosylmethionine synthase (395 aa).

Residue H16 participates in ATP binding. Mg(2+) is bound at residue D18. K(+) is bound at residue E44. L-methionine is bound by residues E57 and Q100. The interval 100-110 (QSPDIAQGVDR) is flexible loop. ATP contacts are provided by residues 167 to 169 (DAK), 233 to 234 (RF), D242, 248 to 249 (RK), A265, and K269. D242 contacts L-methionine. K273 is a binding site for L-methionine.

This sequence belongs to the AdoMet synthase family. As to quaternary structure, homotetramer; dimer of dimers. It depends on Mg(2+) as a cofactor. K(+) serves as cofactor.

The protein resides in the cytoplasm. The enzyme catalyses L-methionine + ATP + H2O = S-adenosyl-L-methionine + phosphate + diphosphate. The protein operates within amino-acid biosynthesis; S-adenosyl-L-methionine biosynthesis; S-adenosyl-L-methionine from L-methionine: step 1/1. Its function is as follows. Catalyzes the formation of S-adenosylmethionine (AdoMet) from methionine and ATP. The overall synthetic reaction is composed of two sequential steps, AdoMet formation and the subsequent tripolyphosphate hydrolysis which occurs prior to release of AdoMet from the enzyme. In Paraburkholderia phymatum (strain DSM 17167 / CIP 108236 / LMG 21445 / STM815) (Burkholderia phymatum), this protein is S-adenosylmethionine synthase.